The sequence spans 563 residues: Efflux pump FUS6 (563 aa).

The interval 1–30 is disordered; sequence MPQPDKMAAVNNAMPQPAPEKSLSSDPQPE. 5 consecutive transmembrane segments (helical) span residues 39–59, 75–95, 105–125, 138–158, and 167–187; these read WLIFVAIALTTFLAALDTSII, LYVWIIDAYLLASTATIPIFA, SLTLIAVCIFTLGSGLCGGAH, GIGGGGILTMSEIVVCDMVSI, and IIGGVWAIAAVVAPVMGGAFA. An N-linked (GlcNAc...) asparagine glycan is attached at asparagine 189. 3 consecutive transmembrane segments (helical) span residues 194-214, 233-253, and 261-281; these read WIFYINLPIAGVSLVALGLFL, WGGSVLLIGSVTSIVLALSWG, and GWQTIVPLVIGLLALVAFFAY. N-linked (GlcNAc...) asparagine glycosylation is present at asparagine 299. The next 6 helical transmembrane spans lie at 305–325, 340–360, 368–388, 401–421, 433–453, and 509–529; these read LLVISFIHSLLLYWVCYFLPV, VMLFPIACTSAPAGVAAGITI, VWHFTGFVLMSIACGLFTLLD, ILFGVGTGTVFTSTLPPILAS, AWTFIRNFGSIWGVAIPAAVF, and KVVWQVSLAFCLLGFILCFFV. The N-linked (GlcNAc...) asparagine glycan is linked to asparagine 553.

The protein belongs to the major facilitator superfamily. TCR/Tet family.

It is found in the membrane. In terms of biological role, efflux pump; part of the gene cluster that mediates the biosynthesis of the mycotoxin fusarin C. Within the cluster, FUS1, FUS2, FUS8 and FUS9 are sufficient for fusarin production. The other FUS cluster members are not essential for fusarin C biosynthesis. The protein is Efflux pump FUS6 of Gibberella moniliformis (strain M3125 / FGSC 7600) (Maize ear and stalk rot fungus).